Consider the following 143-residue polypeptide: Small ribosomal subunit protein uS11c (143 aa).

Belongs to the universal ribosomal protein uS11 family. As to quaternary structure, part of the 30S ribosomal subunit.

Its subcellular location is the plastid. The protein resides in the chloroplast. In Saccharum officinarum (Sugarcane), this protein is Small ribosomal subunit protein uS11c.